The following is a 100-amino-acid chain: Protein RADIALIS-like 1 (100 aa).

The SANT domain occupies 9–64 (QSSGSWTAKQNKAFEQALATYDQDTPNRWQNVAKVVGGKTTEEVKRHYELLVQDIN). Residues 73 to 100 (FPNYRTSGGCTNGRLSQEEKRMRNMRLQ) form a disordered region. Residues 76 to 87 (YRTSGGCTNGRL) are compositionally biased toward polar residues.

Its subcellular location is the nucleus. Probable transcription factor. This chain is Protein RADIALIS-like 1 (RL1), found in Arabidopsis thaliana (Mouse-ear cress).